The chain runs to 219 residues: MMKCLFLLCLCLVPIVVFSSTFTSQNLIDLPSESPLPKPVLDTNGKELNPNSSYRIISIGRGALGGDVYLGKSPNSDAPCPDGVFRYNSDVGPSGTPVRFIPLSGGIFEDQLLNIQFNIPTVRLCVSYTIWKVGINAYLRTMLLETGGTIGQADSSYFKIVKSSILGYNLLYCPITRPILCPFCRDDDFCAKVGVVIQKGKRRLALVNENPLDVNFKEV.

An N-terminal signal peptide occupies residues 1–23; the sequence is MMKCLFLLCLCLVPIVVFSSTFT. A propeptide spanning residues 24–32 is cleaved from the precursor; that stretch reads SQNLIDLPS. Residues 26–31 carry the Vacuolar targeting signal motif; the sequence is NLIDLP. N-linked (GlcNAc...) asparagine glycosylation occurs at Asn51. 2 cysteine pairs are disulfide-bonded: Cys80–Cys125 and Cys173–Cys184.

This sequence belongs to the protease inhibitor I3 (leguminous Kunitz-type inhibitor) family. In terms of tissue distribution, in tubers and green buds of untreated plants. After abscisic acid treatment or mechanical wounding is mostly accumulated in leaves, to a lesser extent in stems, but not in roots.

Inhibitor of cathepsin D (aspartic protease) and trypsin (serine protease). Protects the plant by inhibiting proteases of invading organisms. In Solanum tuberosum (Potato), this protein is Aspartic protease inhibitor 10 (CDI).